The following is a 98-amino-acid chain: Alpha-defensin 1 (98 aa).

Positions 1–19 (MRTLTLLTALLLLALQVQT) are cleaved as a signal peptide. Residues 20–63 (QSLEETADQVPAQDQPGAEAQDITISFAGDERSAREASKSLIGT) constitute a propeptide that is removed on maturation. 3 disulfide bridges follow: C66–C96, C68–C84, and C74–C95.

It belongs to the alpha-defensin family. Paneth cells of the small bowel.

Its subcellular location is the secreted. Functionally, has broad-spectrum antimicrobial properties. The antimicrobial activity decreases in the present of salt in vitro. Binds anionic phospholipids, which leads to the aggregation of liposomes in vitro. Membrane permeabilization of the target cells is an essential part of the peptide's mode of antimicrobial activity. No hemolytic activity against sheep or horse erythrocytes. Has antibacterial activity against the bacterial horse pathogens Gram-positive R.equi ATCC 33701 P(-) (minimum bactericidal concentration or MBC=5 ug/ml) and R.equi ATCC 33701 P(+) (MBC=5 ug/ml), which are resistant against beta-lactam antibiotics. Also has antibacterial activity against highly infectious wild-type strain R.equi 85F P(+) (MBC=5 ug/ml), S.equi subsp. equi (MBC=5 ug/ml), S.equi subsp. zooepidemicus (MBC=5 ug/ml), S.dysgalactiae subsp. equisimilis (MBC=10 ug/ml), S.choleraesuis subsp. choleraesuis serovar Typhimurium (MBC=10 ug/ml), and P.multocida subsp. multocida (MBC=&gt;10 ug/ml). Probably contributes to the antimicrobial barrier function of the small bowel mucosa. The chain is Alpha-defensin 1 from Equus caballus (Horse).